We begin with the raw amino-acid sequence, 681 residues long: Protein NirI (681 aa).

Positions 1–30 (MAMPGKSSHAPSRLLLALLTLILLALPARP) are cleaved as a signal peptide. 5 helical membrane passes run 394 to 414 (IPGI…LFGQ), 436 to 456 (LVVL…VAFL), 468 to 488 (FLIE…LLFW), 535 to 555 (TLFV…LILA), and 568 to 588 (FLRA…GLFI).

It to P.stutzeri NosR.

Its subcellular location is the cell membrane. This Paracoccus denitrificans (strain Pd 1222) protein is Protein NirI (nirI).